The chain runs to 432 residues: Enolase (432 aa).

Gln163 contributes to the (2R)-2-phosphoglycerate binding site. The active-site Proton donor is the Glu205. 3 residues coordinate Mg(2+): Asp242, Glu285, and Asp312. Lys337, Arg366, Ser367, and Lys388 together coordinate (2R)-2-phosphoglycerate. The Proton acceptor role is filled by Lys337.

It belongs to the enolase family. Mg(2+) serves as cofactor.

The protein resides in the cytoplasm. The protein localises to the secreted. It is found in the cell surface. The enzyme catalyses (2R)-2-phosphoglycerate = phosphoenolpyruvate + H2O. The protein operates within carbohydrate degradation; glycolysis; pyruvate from D-glyceraldehyde 3-phosphate: step 4/5. Catalyzes the reversible conversion of 2-phosphoglycerate (2-PG) into phosphoenolpyruvate (PEP). It is essential for the degradation of carbohydrates via glycolysis. The chain is Enolase from Bifidobacterium longum (strain DJO10A).